We begin with the raw amino-acid sequence, 355 residues long: Protein beta (355 aa).

Its function is as follows. The presence of this protein prevents gop protein from killing E.coli. The sequence is that of Protein beta (Beta) from Escherichia coli (Bacteriophage P4).